Reading from the N-terminus, the 455-residue chain is Mitochondrial distribution and morphology protein 10 (455 aa).

Disordered stretches follow at residues 216-249, 278-311, and 377-399; these read WETT…EDAV, IRFS…PSPA, and PRSS…PLGE. Low complexity predominate over residues 217–227; it reads ETTNGENGTNT. A compositionally biased stretch (polar residues) spans 228–237; it reads SAPGNASNSR. The segment covering 291-301 has biased composition (pro residues); the sequence is AQIPPPSPFTP.

It belongs to the MDM10 family. In terms of assembly, component of the ER-mitochondria encounter structure (ERMES) or MDM complex, composed of MMM1, MDM10, MDM12 and MDM34. Associates with the mitochondrial outer membrane sorting assembly machinery SAM(core) complex.

The protein localises to the mitochondrion outer membrane. Component of the ERMES/MDM complex, which serves as a molecular tether to connect the endoplasmic reticulum and mitochondria. Components of this complex are involved in the control of mitochondrial shape and protein biogenesis and may function in phospholipid exchange. MDM10 is involved in the late assembly steps of the general translocase of the mitochondrial outer membrane (TOM complex). Functions in the TOM40-specific route of the assembly of outer membrane beta-barrel proteins, including the association of TOM40 with the receptor TOM22 and small TOM proteins. Can associate with the SAM(core) complex as well as the MDM12-MMM1 complex, both involved in late steps of the major beta-barrel assembly pathway, that is responsible for biogenesis of all outer membrane beta-barrel proteins. May act as a switch that shuttles between both complexes and channels precursor proteins into the TOM40-specific pathway. Plays a role in mitochondrial morphology and in the inheritance of mitochondria. This is Mitochondrial distribution and morphology protein 10 from Coprinopsis cinerea (strain Okayama-7 / 130 / ATCC MYA-4618 / FGSC 9003) (Inky cap fungus).